Reading from the N-terminus, the 331-residue chain is Putative heat stress transcription factor A-6a (331 aa).

The tract at residues 135-160 is disordered; the sequence is RRGAGTGSTTPRAVNCGGGGGEGEVE. Positions 156-238 form a coiled coil; that stretch reads EGEVERLRRD…VERKKRRMLA (83 aa). Residues 162 to 212 are hydrophobic repeat HR-A/B; sequence LRRDKEALARELARLRRQQQEARAQLLDMERRVRGTERRQEQCTEFLARAL. Positions 230–235 match the Nuclear localization signal motif; sequence ERKKRR. A Nuclear export signal motif is present at residues 246-253; it reads LTFEALAL. Residues 270–279 carry the AHA1 motif; the sequence is DMIWYELLGE. An AHA2 motif is present at residues 305–313; that stretch reads AEPWEEMGE.

Belongs to the HSF family. Class A subfamily. In terms of assembly, homotrimer. Exhibits temperature-dependent phosphorylation.

The protein localises to the cytoplasm. Its subcellular location is the nucleus. Its function is as follows. Transcriptional regulator that specifically binds DNA of heat shock promoter elements (HSE). The sequence is that of Putative heat stress transcription factor A-6a (HSFA6A) from Oryza sativa subsp. japonica (Rice).